The chain runs to 595 residues: Beta-(1--&gt;2)glucan export ATP-binding/permease protein NdvA (595 aa).

The ABC transmembrane type-1 domain occupies 21–301; it reads SLLICAANVM…MSNFINLTVS (281 aa). 5 consecutive transmembrane segments (helical) span residues 22–42, 55–75, 128–148, 152–172, and 248–268; these read LLICAANVMLAIITIAEPILF, IILTLTIWVCFGISHIIAYVL, AIWLDFMRQHLSTLVALFILI, FNMNWRLSIVLVVLAIIYVLI, and TASTISIVCVLLLGAFFVAKG. An ABC transporter domain is found at 335–569; sequence VQFHHVTYKF…GGRFYKLLKA (235 aa). 368–375 lines the ATP pocket; sequence GPTGAGKT.

This sequence belongs to the ABC transporter superfamily. Beta-(1--&gt;2)glucan exporter (TC 3.A.1.108.1) family. As to quaternary structure, homodimer.

Its subcellular location is the cell inner membrane. It catalyses the reaction [(1-&gt;2)-beta-D-glucosyl](n)(in) + ATP + H2O = [(1-&gt;2)-beta-D-glucosyl](n)(out) + ADP + phosphate + H(+). In terms of biological role, involved in beta-(1--&gt;2)glucan export. Transmembrane domains (TMD) form a pore in the inner membrane and the ATP-binding domain (NBD) is responsible for energy generation. The protein is Beta-(1--&gt;2)glucan export ATP-binding/permease protein NdvA of Bartonella quintana (strain Toulouse) (Rochalimaea quintana).